A 584-amino-acid polypeptide reads, in one-letter code: UvrABC system protein C (584 aa).

One can recognise a GIY-YIG domain in the interval 14–91 (HKPGCYLWKD…IKTHLPKYNI (78 aa)). The region spanning 192-227 (DHILMILQTKEQHAVTKLDFENAQKYAEQQKALTSI) is the UVR domain.

The protein belongs to the UvrC family. Interacts with UvrB in an incision complex.

It is found in the cytoplasm. Its function is as follows. The UvrABC repair system catalyzes the recognition and processing of DNA lesions. UvrC both incises the 5' and 3' sides of the lesion. The N-terminal half is responsible for the 3' incision and the C-terminal half is responsible for the 5' incision. The polypeptide is UvrABC system protein C (Ureaplasma parvum serovar 3 (strain ATCC 27815 / 27 / NCTC 11736)).